Reading from the N-terminus, the 155-residue chain is Interleukin-2 (155 aa).

Positions 1–20 (MYKIQLLSCIALTLALVANG) are cleaved as a signal peptide. Thr23 carries an O-linked (GalNAc...) threonine glycan. A disulfide bond links Cys79 and Cys127.

Belongs to the IL-2 family.

The protein resides in the secreted. Cytokine produced by activated CD4-positive helper T-cells and to a lesser extend activated CD8-positive T-cells and natural killer (NK) cells that plays pivotal roles in the immune response and tolerance. Binds to a receptor complex composed of either the high-affinity trimeric IL-2R (IL2RA/CD25, IL2RB/CD122 and IL2RG/CD132) or the low-affinity dimeric IL-2R (IL2RB and IL2RG). Interaction with the receptor leads to oligomerization and conformation changes in the IL-2R subunits resulting in downstream signaling starting with phosphorylation of JAK1 and JAK3. In turn, JAK1 and JAK3 phosphorylate the receptor to form a docking site leading to the phosphorylation of several substrates including STAT5. This process leads to activation of several pathways including STAT, phosphoinositide-3-kinase/PI3K and mitogen-activated protein kinase/MAPK pathways. Functions as a T-cell growth factor and can increase NK-cell cytolytic activity as well. Promotes strong proliferation of activated B-cells and subsequently immunoglobulin production. Plays a pivotal role in regulating the adaptive immune system by controlling the survival and proliferation of regulatory T-cells, which are required for the maintenance of immune tolerance. Moreover, participates in the differentiation and homeostasis of effector T-cell subsets, including Th1, Th2, Th17 as well as memory CD8-positive T-cells. The chain is Interleukin-2 (IL2) from Ovis aries (Sheep).